Here is a 543-residue protein sequence, read N- to C-terminus: Ribosomal protein arginine N-methyltransferase rmt3 (543 aa).

The C2H2-type zinc-finger motif lies at 58-81; that stretch reads FCCLFCDSTFTCLKDLWSHCKEAH. The 327-residue stretch at 217-543 folds into the SAM-dependent MTase PRMT-type domain; the sequence is DSYYFESYAG…KADSQSYVLN (327 aa). Arg239, Gly263, Asp285, Ser287, Ile313, and Glu314 together coordinate S-adenosyl-L-homocysteine. Catalysis depends on residues Glu329 and Glu338.

The protein belongs to the class I-like SAM-binding methyltransferase superfamily. Protein arginine N-methyltransferase family. In terms of assembly, interacts with ef1a-c, rps2 and rps24. Note=Associates with the 40S ribosomal particle.

Its subcellular location is the cytoplasm. It is found in the cytosol. The catalysed reaction is L-arginyl-[protein] + S-adenosyl-L-methionine = N(omega)-methyl-L-arginyl-[protein] + S-adenosyl-L-homocysteine + H(+). It catalyses the reaction L-arginyl-[protein] + 2 S-adenosyl-L-methionine = N(omega),N(omega)-dimethyl-L-arginyl-[protein] + 2 S-adenosyl-L-homocysteine + 2 H(+). Functionally, methylates (mono and asymmetric dimethylation) the guanidino nitrogens of arginyl residues in ribosomal protein rps2. This Schizosaccharomyces pombe (strain 972 / ATCC 24843) (Fission yeast) protein is Ribosomal protein arginine N-methyltransferase rmt3 (rmt3).